The chain runs to 196 residues: Elongation factor Ts (196 aa).

Residues 80-83 (TDFV) are involved in Mg(2+) ion dislocation from EF-Tu.

Belongs to the EF-Ts family. Heterotetramer composed of two EF-Ts.EF-Tu dimer complexes.

Its subcellular location is the cytoplasm. In terms of biological role, associates with the EF-Tu.GDP complex and induces the exchange of GDP to GTP. It remains bound to the aminoacyl-tRNA.EF-Tu.GTP complex up to the GTP hydrolysis stage on the ribosome. The chain is Elongation factor Ts (tsf) from Thermus thermophilus (strain ATCC 27634 / DSM 579 / HB8).